The primary structure comprises 320 residues: MKIIFAGTPEFAATALAALLKTSHEIIAVYTQPDRKAGRGQKLTPSPVKQLALEHNIPVYQPLHFKASTEEGLAAQQELAALGADVMVVAAYGLILPQAVLDTPKYGCLNIHGSLLPRWRGAAPIQRAIATGDDETGITIMQMAAGLDTGDMMYKTYCPITSEDTSATLHDKLAAQGATAICAVLESEETLQKYLAEREVQDESLTVYAHKLVKSEARIDWSMNAVQVDRNIRAFNPWPVAFIQLDENNALRVWNSTISNQNKADAQAGEIIAIDKQGVHVACGENTFICLTSVQWPGGKALNAQQIAQTQKLHVGQILP.

114 to 117 contacts (6S)-5,6,7,8-tetrahydrofolate; it reads SLLP.

Belongs to the Fmt family.

It catalyses the reaction L-methionyl-tRNA(fMet) + (6R)-10-formyltetrahydrofolate = N-formyl-L-methionyl-tRNA(fMet) + (6S)-5,6,7,8-tetrahydrofolate + H(+). Its function is as follows. Attaches a formyl group to the free amino group of methionyl-tRNA(fMet). The formyl group appears to play a dual role in the initiator identity of N-formylmethionyl-tRNA by promoting its recognition by IF2 and preventing the misappropriation of this tRNA by the elongation apparatus. The polypeptide is Methionyl-tRNA formyltransferase (Acinetobacter baumannii (strain ACICU)).